We begin with the raw amino-acid sequence, 303 residues long: Glycine--tRNA ligase alpha subunit (303 aa).

This sequence belongs to the class-II aminoacyl-tRNA synthetase family. In terms of assembly, tetramer of two alpha and two beta subunits.

The protein localises to the cytoplasm. It catalyses the reaction tRNA(Gly) + glycine + ATP = glycyl-tRNA(Gly) + AMP + diphosphate. This Escherichia coli (strain K12) protein is Glycine--tRNA ligase alpha subunit (glyQ).